The chain runs to 103 residues: L-rhamnose mutarotase (103 aa).

A substrate-binding site is contributed by Tyr18. The active-site Proton donor is His22. Substrate contacts are provided by residues Tyr41 and 76-77; that span reads WW.

This sequence belongs to the rhamnose mutarotase family. As to quaternary structure, homodimer.

It localises to the cytoplasm. It catalyses the reaction alpha-L-rhamnose = beta-L-rhamnose. The protein operates within carbohydrate metabolism; L-rhamnose metabolism. Functionally, involved in the anomeric conversion of L-rhamnose. This Enterococcus faecalis (strain ATCC 700802 / V583) protein is L-rhamnose mutarotase.